Here is a 239-residue protein sequence, read N- to C-terminus: Orotidine 5'-phosphate decarboxylase (239 aa).

Substrate-binding positions include D15, K37, 64-73 (DLKFHDIPNT), T126, R187, Q196, G216, and R217. Catalysis depends on K66, which acts as the Proton donor.

Belongs to the OMP decarboxylase family. Type 1 subfamily. In terms of assembly, homodimer.

The catalysed reaction is orotidine 5'-phosphate + H(+) = UMP + CO2. It participates in pyrimidine metabolism; UMP biosynthesis via de novo pathway; UMP from orotate: step 2/2. Catalyzes the decarboxylation of orotidine 5'-monophosphate (OMP) to uridine 5'-monophosphate (UMP). The sequence is that of Orotidine 5'-phosphate decarboxylase from Geobacter metallireducens (strain ATCC 53774 / DSM 7210 / GS-15).